Consider the following 741-residue polypeptide: Oosporein cluster regulator OpS3 (741 aa).

The tract at residues 16–39 (GRPARGQSTTTRSRNTQQSAPTSQ) is disordered. Over residues 20 to 34 (RGQSTTTRSRNTQQS) the composition is skewed to low complexity. A DNA-binding region (zn(2)-C6 fungal-type) is located at residues 44–69 (CRRCRQHRIKCSEKPCEPCRANNSKC). The disordered stretch occupies residues 139–167 (HPNTPNSCPSQSGDIRQQQIPCSQHASPA). Positions 473–500 (TAGQSMARLSETIRQLETALDELPEQLL) form a coiled coil. The segment at 501–528 (TRHGSRTPTNNGQTHRSRPTCSTMPHTN) is disordered. The span at 506-528 (RTPTNNGQTHRSRPTCSTMPHTN) shows a compositional bias: polar residues.

The protein resides in the nucleus. Its function is as follows. Transcription factor involved in regulation of gene cluster that mediates the biosynthesis of oosporein, a metabolite required for fungal virulence that acts by evading host immunity to facilitate fungal multiplication in insects. Binds oosporein cluster genes at a conserved 5'-CGGA-3' motif with the exception of OpS5. The presence of this motif in the OpS3 promoter would suggest the formation of a positive feedback loop for self-activation. This is Oosporein cluster regulator OpS3 from Beauveria bassiana (strain ARSEF 2860) (White muscardine disease fungus).